A 141-amino-acid chain; its full sequence is ATP synthase epsilon chain (141 aa).

This sequence belongs to the ATPase epsilon chain family. As to quaternary structure, F-type ATPases have 2 components, CF(1) - the catalytic core - and CF(0) - the membrane proton channel. CF(1) has five subunits: alpha(3), beta(3), gamma(1), delta(1), epsilon(1). CF(0) has three main subunits: a, b and c.

Its subcellular location is the cell inner membrane. Its function is as follows. Produces ATP from ADP in the presence of a proton gradient across the membrane. This chain is ATP synthase epsilon chain, found in Burkholderia mallei (strain NCTC 10247).